A 165-amino-acid polypeptide reads, in one-letter code: Putative inactive neutral ceramidase B (165 aa).

It belongs to the neutral ceramidase family. In terms of tissue distribution, ubiquitous. Expression is reduced with increasing age and in late-onset Alzheimer disease (LOAD) patients. This reduction is even more pronounced in patients with an affected mother.

The sequence is that of Putative inactive neutral ceramidase B from Homo sapiens (Human).